Reading from the N-terminus, the 136-residue chain is MSALVYFSSSSENTHRFMQRLGLPATRIPLNERERIRVDEPYILVVPSYGGGGMAGAVPRQVIRFLNDEHNRARIRGVIASGNRNFGDAWGCAGDVIAQKCGVPWLYRFELMGTQRDIDHVRKGVNEFWRQQTRSA.

The protein belongs to the NrdI family.

In terms of biological role, probably involved in ribonucleotide reductase function. The chain is Protein NrdI from Salmonella arizonae (strain ATCC BAA-731 / CDC346-86 / RSK2980).